The following is an 82-amino-acid chain: NAD(P)H-quinone oxidoreductase subunit O, organellar chromatophore (82 aa).

It belongs to the complex I NdhO subunit family. As to quaternary structure, NDH-1 can be composed of about 15 different subunits; different subcomplexes with different compositions have been identified which probably have different functions.

The protein localises to the plastid. It localises to the organellar chromatophore thylakoid membrane. The catalysed reaction is a plastoquinone + NADH + (n+1) H(+)(in) = a plastoquinol + NAD(+) + n H(+)(out). It carries out the reaction a plastoquinone + NADPH + (n+1) H(+)(in) = a plastoquinol + NADP(+) + n H(+)(out). In terms of biological role, NDH-1 shuttles electrons from an unknown electron donor, via FMN and iron-sulfur (Fe-S) centers, to quinones in the respiratory and/or the photosynthetic chain. The immediate electron acceptor for the enzyme in this species is believed to be plastoquinone. Couples the redox reaction to proton translocation, and thus conserves the redox energy in a proton gradient. Cyanobacterial NDH-1 also plays a role in inorganic carbon-concentration. The polypeptide is NAD(P)H-quinone oxidoreductase subunit O, organellar chromatophore (Paulinella chromatophora).